A 184-amino-acid polypeptide reads, in one-letter code: MYLMKDITRDGAKVLRETAKPVTFPLSDEDKQLAHDMMAYLVISQDEEQNEKYHLRPGVGLAAPQVGQSKAMAAVLVPGDDNEILFKEVLINPRIISNSVQHAALAEGEGCLSVDKDVPGYVVRADRITISYQNEAGEHKKIRLKNYPAIVCQHEIDHLNGVLFYDHINKEHPFTIDPDAVIIK.

Fe cation-binding residues include cysteine 111 and histidine 154. Residue glutamate 155 is part of the active site. A Fe cation-binding site is contributed by histidine 158.

It belongs to the polypeptide deformylase family. The cofactor is Fe(2+).

It carries out the reaction N-terminal N-formyl-L-methionyl-[peptide] + H2O = N-terminal L-methionyl-[peptide] + formate. In terms of biological role, removes the formyl group from the N-terminal Met of newly synthesized proteins. Requires at least a dipeptide for an efficient rate of reaction. N-terminal L-methionine is a prerequisite for activity but the enzyme has broad specificity at other positions. This chain is Peptide deformylase, found in Lacticaseibacillus casei (strain BL23) (Lactobacillus casei).